A 407-amino-acid chain; its full sequence is V-set and immunoglobulin domain-containing protein 1 (407 aa).

A signal peptide spans 1–22 (MMVFAFWKVFLILNCLAGQVSM). One can recognise an Ig-like V-type domain in the interval 23–134 (VQVTIPDTFV…HFVGKNQGLL (112 aa)). Over 23–234 (VQVTIPDTFV…EIDLTSSHPE (212 aa)) the chain is Extracellular. Asparagine 39 is a glycosylation site (N-linked (GlcNAc...) asparagine). 2 disulfides stabilise this stretch: cysteine 44–cysteine 118 and cysteine 163–cysteine 213. The Ig-like C2-type domain occupies 145–229 (PFCTIQGRPE…GNSSCEIDLT (85 aa)). N-linked (GlcNAc...) asparagine glycans are attached at residues asparagine 202 and asparagine 221. Residues 235-255 (VGIIIGALVGALIGAAVIICV) traverse the membrane as a helical segment. Topologically, residues 256–407 (VYFARNKVKS…SKAGEDTVKA (152 aa)) are cytoplasmic. Disordered regions lie at residues 268–289 (QKNL…PQQS) and 318–407 (TAVL…TVKA). Residues serine 273 and serine 274 each carry the phosphoserine modification. The segment covering 361–371 (DPETETEPEPE) has biased composition (acidic residues).

The protein resides in the membrane. The chain is V-set and immunoglobulin domain-containing protein 1 (Vsig1) from Mus musculus (Mouse).